Reading from the N-terminus, the 996-residue chain is KK-1 biosynthesis cluster protein D (996 aa).

Disordered stretches follow at residues 307-333, 425-449, 489-556, and 571-602; these read HDTD…PELD, EQDN…ARDL, AGVA…ALRA, and STHS…SLHS. Polar residues-rich tracts occupy residues 318–329 and 428–439; these read PIRSNKLSQSKQ and NQTNEEGTGEVQ. 2 stretches are compositionally biased toward basic and acidic residues: residues 440–449 and 500–527; these read SQRDRRARDL and RAAE…DKAA. Positions 572 to 590 are enriched in polar residues; that stretch reads THSIHQRASVNTTAPTVAR.

It functions in the pathway secondary metabolite biosynthesis. Its function is as follows. Part of the gene cluster that mediates the biosynthesis of KK-1, a novel cyclic depsipeptide with 10 residues which is a promising active compound with high activity against many plant pathogens, especially Botrytis cinerea. The role of kk1D in KK-1 biosynthesis has still to be determined. The nonribosomal peptide synthetase (NRPS) kk1B catalyzes the elongation and cyclization of the decapeptide chain composed of 1 D-lactic acid residue (D-Lac), 1 pipecolic acid residue (Pip), 1 aspartic acid residue (Asp), 1 isoleucine residue (Ile), 1 glycine residue (Gly), 1 tyrosine residue (Tyr) and 4 valine residues (Val). The Asp, Ile and 3 Val residues are N-methylated by the 5 methyltransferase domains from the NRPS (found in modules 3, 5, 6, 7 and 9), whereas the Tyr residue is O-methylated by the cluster encoded O-methyltransferase kk1A. The thioesterase kk1J is likely to be involved in the corrective mechanism of peptide chain synthesis. The D-lactate dehydrogenase kk1H is involved in the synthesis of D-lactic acid from pyruvic acid, which is recognized by the A domain of the first kk1B module. The pyrroline-5-carboxylate reductase kk1I is involved in the synthesis of the L-pipecolic acid residue of KK-1 from delta-1-pyrroline-5-carboxylate (P5C), a metabolic intermediate of lysine. It is still unclear how kk1C and kk1D are involved in the production of KK-1. This Curvularia clavata protein is KK-1 biosynthesis cluster protein D.